A 466-amino-acid chain; its full sequence is Putative transcription factor bHLH041 (466 aa).

3 disordered regions span residues 108-129 (PANS…SLSP), 194-213 (LTGP…KGRA), and 260-289 (RENA…TQLQ). The segment covering 120–129 (PSSSSSSLSP) has biased composition (low complexity). The span at 268–279 (EGSGGSGGGGRY) shows a compositional bias: gly residues. Positions 285–334 (ATQLQHMISERKRREKLNESFQALRSLLPPGTKKDKASVLSIAREQLSSL) constitute a bHLH domain.

In terms of assembly, homodimer.

It localises to the nucleus. The polypeptide is Putative transcription factor bHLH041 (BHLH41) (Arabidopsis thaliana (Mouse-ear cress)).